A 150-amino-acid chain; its full sequence is Deoxyuridine 5'-triphosphate nucleotidohydrolase (150 aa).

Residues 68–70, N81, 85–87, and K95 each bind substrate; these read RSG and TID.

This sequence belongs to the dUTPase family. Requires Mg(2+) as cofactor.

It catalyses the reaction dUTP + H2O = dUMP + diphosphate + H(+). The protein operates within pyrimidine metabolism; dUMP biosynthesis; dUMP from dCTP (dUTP route): step 2/2. Functionally, this enzyme is involved in nucleotide metabolism: it produces dUMP, the immediate precursor of thymidine nucleotides and it decreases the intracellular concentration of dUTP so that uracil cannot be incorporated into DNA. This is Deoxyuridine 5'-triphosphate nucleotidohydrolase from Rickettsia bellii (strain OSU 85-389).